Consider the following 1148-residue polypeptide: Zinc finger CCCH domain-containing protein 18 (1148 aa).

The segment covering 1 to 13 (MDTPESPTQSPQS) has biased composition (low complexity). 3 disordered regions span residues 1–315 (MDTP…PMDR), 380–417 (DPFS…LPPP), and 521–1127 (YTET…REEL). Basic and acidic residues-rich tracts occupy residues 53 to 73 (VPEH…AGRE) and 82 to 96 (EDYK…DIHQ). Composition is skewed to acidic residues over residues 144–156 (ERGD…EEDE) and 167–176 (ELEEEEDEEE). The span at 190–202 (DLKDESSVSRDLD) shows a compositional bias: basic and acidic residues. 2 stretches are compositionally biased toward acidic residues: residues 203 to 214 (EHELDYDEEVPE) and 233 to 245 (EDGE…DEEE). The segment covering 261 to 289 (DNRDTPLRKSEDSREGGRRDSFRDKKKEE) has biased composition (basic and acidic residues). Residues 290-306 (DDGEIDEGEIDDDDLEE) are compositionally biased toward acidic residues. The segment covering 388-397 (PPGGAAGGGP) has biased composition (gly residues). Basic and acidic residues predominate over residues 530–615 (PDRERERDPR…EKKDEKEKTL (86 aa)). Positions 543–584 (RERERERERDHRERERRQREREREREREREKDSRRRKDEWDR) form a coiled coil. The span at 622-631 (NMPPRGPMEP) shows a compositional bias: pro residues. Positions 632 to 646 (PTKKDMLSVTKRPDE) are enriched in basic and acidic residues. At Ser-666 the chain carries Phosphoserine. Low complexity predominate over residues 677–740 (SGSSVSLSNS…SRSGSFSSSP (64 aa)). Composition is skewed to pro residues over residues 783–800 (KVMP…PPKP) and 807–817 (PPNPRPPGRPP). Over residues 818–833 (GPREPREPPNMREGRK) the composition is skewed to basic and acidic residues. Low complexity-rich tracts occupy residues 847 to 875 (VSGS…ASRS), 882 to 903 (SLSV…SVRS), and 914 to 925 (ASPVSSASSRSP). Composition is skewed to basic and acidic residues over residues 933–964 (DRGP…KRVD) and 1012–1029 (QTDR…KERP). At Ser-1056 the chain carries Phosphoserine. Composition is skewed to low complexity over residues 1083 to 1098 (PAKS…SAAK) and 1107 to 1119 (GSAS…KPSS). The stretch at 1118–1146 (SSTLSRREELLKQLKAVEDAIARKRAKIP) forms a coiled coil.

Its subcellular location is the nucleus. The sequence is that of Zinc finger CCCH domain-containing protein 18 (zc3h18) from Danio rerio (Zebrafish).